The primary structure comprises 262 residues: Small ribosomal subunit protein eS4B (262 aa).

In terms of domain architecture, S4 RNA-binding spans 42-105; that stretch reads LPLIVFLRNR…GEHFRLVYDI (64 aa). Ser223 carries the post-translational modification Phosphoserine.

The protein belongs to the eukaryotic ribosomal protein eS4 family. As to quaternary structure, component of the small ribosomal subunit (SSU). Mature yeast ribosomes consist of a small (40S) and a large (60S) subunit. The 40S small subunit contains 1 molecule of ribosomal RNA (18S rRNA) and at least 33 different proteins. The large 60S subunit contains 3 rRNA molecules (25S, 5.8S and 5S rRNA) and at least 46 different proteins.

The protein localises to the cytoplasm. The protein resides in the nucleus. It is found in the nucleolus. Its function is as follows. Component of the ribosome, a large ribonucleoprotein complex responsible for the synthesis of proteins in the cell. The small ribosomal subunit (SSU) binds messenger RNAs (mRNAs) and translates the encoded message by selecting cognate aminoacyl-transfer RNA (tRNA) molecules. The large subunit (LSU) contains the ribosomal catalytic site termed the peptidyl transferase center (PTC), which catalyzes the formation of peptide bonds, thereby polymerizing the amino acids delivered by tRNAs into a polypeptide chain. The nascent polypeptides leave the ribosome through a tunnel in the LSU and interact with protein factors that function in enzymatic processing, targeting, and the membrane insertion of nascent chains at the exit of the ribosomal tunnel. This Schizosaccharomyces pombe (strain 972 / ATCC 24843) (Fission yeast) protein is Small ribosomal subunit protein eS4B (rps402).